A 215-amino-acid polypeptide reads, in one-letter code: FGFR1 oncogene partner 2 homolog (215 aa).

Positions 35 to 183 (LLNKRVEAMK…SGLRELLGIS (149 aa)) form a coiled coil.

This sequence belongs to the SIKE family.

Its subcellular location is the cytoplasm. The chain is FGFR1 oncogene partner 2 homolog (fgfr1op2) from Danio rerio (Zebrafish).